The chain runs to 1153 residues: Tyrosine-protein kinase JAK1 (1153 aa).

The region spanning 32 to 416 is the FERM domain; it reads KGLEIHFYLA…GYFRLTVDAH (385 aa). Residues 435 to 540 enclose the SH2; atypical domain; it reads GCHGPICTEY…NLRFQLRRCC (106 aa). Protein kinase domains follow at residues 580–846 and 872–1150; these read IVQG…DIVM and LKKI…QQML. ATP contacts are provided by residues 878–886 and lysine 905; that span reads LGEGHFGKV. The active-site Proton acceptor is the aspartate 1000. Residues tyrosine 1031 and tyrosine 1032 each carry the phosphotyrosine; by autocatalysis modification.

It belongs to the protein kinase superfamily. Tyr protein kinase family. JAK subfamily. Mg(2+) serves as cofactor.

Its subcellular location is the endomembrane system. The catalysed reaction is L-tyrosyl-[protein] + ATP = O-phospho-L-tyrosyl-[protein] + ADP + H(+). In terms of biological role, tyrosine kinase of the non-receptor type, involved in the IFN-alpha/beta/gamma signal pathway. Appears to be required in early development for specific cell migrations (epiboly), expression of homeobox protein goosecoid and formation of anterior structures. This is Tyrosine-protein kinase JAK1 (jak1) from Danio rerio (Zebrafish).